Here is a 188-residue protein sequence, read N- to C-terminus: Elongation factor P (188 aa).

Position 34 is an N6-(3,6-diaminohexanoyl)-5-hydroxylysine (Lys34).

Belongs to the elongation factor P family. Post-translationally, may be beta-lysylated on the epsilon-amino group of Lys-34 by the combined action of EpmA and EpmB, and then hydroxylated on the C5 position of the same residue by EpmC (if this protein is present). Lysylation is critical for the stimulatory effect of EF-P on peptide-bond formation. The lysylation moiety may extend toward the peptidyltransferase center and stabilize the terminal 3-CCA end of the tRNA. Hydroxylation of the C5 position on Lys-34 may allow additional potential stabilizing hydrogen-bond interactions with the P-tRNA.

It localises to the cytoplasm. It functions in the pathway protein biosynthesis; polypeptide chain elongation. In terms of biological role, involved in peptide bond synthesis. Alleviates ribosome stalling that occurs when 3 or more consecutive Pro residues or the sequence PPG is present in a protein, possibly by augmenting the peptidyl transferase activity of the ribosome. Modification of Lys-34 is required for alleviation. This Methylococcus capsulatus (strain ATCC 33009 / NCIMB 11132 / Bath) protein is Elongation factor P.